Reading from the N-terminus, the 1241-residue chain is Dinoflagellate luciferase (1241 aa).

3 luciferase regions span residues 114-465, 491-842, and 868-1218; these read KTGL…IKRD, DQGF…TKRD, and EKGF…KKRD.

This sequence belongs to the calycin superfamily. Luciferase family.

It is found in the cytoplasmic vesicle. The catalysed reaction is dinoflagellate luciferin + O2 = oxidized dinoflagellate luciferin + hnu + H2O + H(+). With respect to regulation, regulated by pH: upon acidification, at a pH of 6.3, dinoflagellate luciferin is released from luciferin-binding protein LBP, allowing the interaction between Dinoflagellate luciferase and its substrate luciferin. In terms of biological role, emits blue light flashes with a wavelength of 475 nm during the night phase. This chain is Dinoflagellate luciferase, found in Lingulodinium polyedra (Dinoflagellate).